Reading from the N-terminus, the 509-residue chain is Steroid 17-alpha-hydroxylase/17,20 lyase (509 aa).

Asn-202 is a substrate binding site. Heme is bound at residue Cys-442.

It belongs to the cytochrome P450 family. Requires heme as cofactor.

It is found in the endoplasmic reticulum membrane. The protein resides in the microsome membrane. It catalyses the reaction a C21-steroid + reduced [NADPH--hemoprotein reductase] + O2 = a 17alpha-hydroxy-C21-steroid + oxidized [NADPH--hemoprotein reductase] + H2O + H(+). The enzyme catalyses progesterone + reduced [NADPH--hemoprotein reductase] + O2 = 17alpha-hydroxyprogesterone + oxidized [NADPH--hemoprotein reductase] + H2O + H(+). It carries out the reaction pregnenolone + reduced [NADPH--hemoprotein reductase] + O2 = 17alpha-hydroxypregnenolone + oxidized [NADPH--hemoprotein reductase] + H2O + H(+). The catalysed reaction is 17alpha-hydroxyprogesterone + reduced [NADPH--hemoprotein reductase] + O2 = androst-4-ene-3,17-dione + acetate + oxidized [NADPH--hemoprotein reductase] + H2O + 2 H(+). It catalyses the reaction 17alpha-hydroxyprogesterone + reduced [NADPH--hemoprotein reductase] + O2 = 16alpha,17alpha-dihydroxyprogesterone + oxidized [NADPH--hemoprotein reductase] + H2O + H(+). The enzyme catalyses 16alpha,17alpha-dihydroxyprogesterone + reduced [NADPH--hemoprotein reductase] + O2 = 6beta,16alpha,17alpha-trihydroxyprogesterone + oxidized [NADPH--hemoprotein reductase] + H2O + H(+). It carries out the reaction 17alpha-hydroxypregnenolone + reduced [NADPH--hemoprotein reductase] + O2 = 3beta-hydroxyandrost-5-en-17-one + acetate + oxidized [NADPH--hemoprotein reductase] + H2O + 2 H(+). The catalysed reaction is 16alpha,17alpha-dihydroxypregnenolone + reduced [NADPH--hemoprotein reductase] + O2 = 3beta,16alpha-dihydroxy-androst-5-en-17-one + acetate + oxidized [NADPH--hemoprotein reductase] + H2O + 2 H(+). It catalyses the reaction 3beta-hydroxyandrost-5-en-17-one + reduced [NADPH--hemoprotein reductase] + O2 = 3beta,16alpha-dihydroxy-androst-5-en-17-one + oxidized [NADPH--hemoprotein reductase] + H2O + H(+). The enzyme catalyses androst-4-ene-3,17-dione + reduced [NADPH--hemoprotein reductase] + O2 = 16alpha-hydroxyandrost-4-ene-3,17-dione + oxidized [NADPH--hemoprotein reductase] + H2O + H(+). It functions in the pathway steroid hormone biosynthesis. The protein operates within steroid biosynthesis; glucocorticoid biosynthesis. Regulated predominantly by intracellular cAMP levels. The 17,20-lyase activity is stimulated by cytochrome b5, which acts as an allosteric effector increasing the Vmax of the lyase activity. In terms of biological role, a cytochrome P450 monooxygenase involved in corticoid and androgen biosynthesis. Catalyzes 17-alpha hydroxylation of C21 steroids, which is common for both pathways. A second oxidative step, required only for androgen synthesis, involves an acyl-carbon cleavage. The 17-alpha hydroxy intermediates, as part of adrenal glucocorticoids biosynthesis pathway, are precursors of cortisol. Hydroxylates steroid hormones, pregnenolone and progesterone to form 17-alpha hydroxy metabolites, followed by the cleavage of the C17-C20 bond to form C19 steroids, dehydroepiandrosterone (DHEA) and androstenedione. Has 16-alpha hydroxylase activity. Catalyzes 16-alpha hydroxylation of 17-alpha hydroxy pregnenolone, followed by the cleavage of the C17-C20 bond to form 16-alpha-hydroxy DHEA. Also 16-alpha hydroxylates androgens, relevant for estriol synthesis. Mechanistically, uses molecular oxygen inserting one oxygen atom into a substrate, and reducing the second into a water molecule, with two electrons provided by NADPH via cytochrome P450 reductase (CPR; NADPH-ferrihemoprotein reductase). The sequence is that of Steroid 17-alpha-hydroxylase/17,20 lyase (CYP17A1) from Bison bison (American bison).